The chain runs to 2151 residues: Polycystin-1-like protein 3 (2151 aa).

Positions 1 to 20 (MLLQRRSWLWLYIRIGVILG) are cleaved as a signal peptide. The Extracellular portion of the chain corresponds to 25–1073 (RKPSIREQHG…IKLLLHVTNN (1049 aa)). The C-type lectin domain maps to 34-142 (GGNSCYQLNR…CIEKHHFICQ (109 aa)). 2 disulfides stabilise this stretch: Cys55-Cys141 and Cys116-Cys133. The N-linked (GlcNAc...) asparagine glycan is linked to Asn89. Over residues 222 to 245 (SLTGRPQVTSDTLASSSPPQGTSD) the composition is skewed to polar residues. Residues 222–609 (SLTGRPQVTS…SSSPPWPVIT (388 aa)) form a disordered region. A compositionally biased stretch (low complexity) spans 246 to 348 (TPASSSPPQV…ASSSPPQGTS (103 aa)). 2 stretches are compositionally biased toward polar residues: residues 349–363 (DTPA…TLDT) and 371–600 (QGTS…TPAS). Residues Asn566, Asn579, Asn592, Asn913, and Asn951 are each glycosylated (N-linked (GlcNAc...) asparagine). A GAIN-B domain is found at 899–1061 (TSLNTSTDHF…FIVPRTVDVE (163 aa)). Disulfide bonds link Cys1011–Cys1039 and Cys1026–Cys1041. Residues 1011–1061 (CYFWDRYNRTWKSDGCQVGPKSTILKTQCLCDHLTFFSSDFFIVPRTVDVE) form a GPS region. The interval 1045–1061 (TFFSSDFFIVPRTVDVE) is stachel. The chain crosses the membrane as a helical span at residues 1074–1094 (PVGVSLLSSLLGFYILLAMWA). The Cytoplasmic portion of the chain corresponds to 1095-1283 (SRKDREDMQK…NQFTRVQRLS (189 aa)). Residues 1119-1236 (SHYLIQVYTG…GNCERDRVFT (118 aa)) form the PLAT domain. The helical transmembrane segment at 1284 to 1304 (CCMALLLCDMVINIMFWKMGG) threads the bilayer. Over 1305–1320 (TTAKRGTEQLGPLAVT) the chain is Extracellular. Residues 1321–1341 (LSELLVSIQTSIILFPIHLIF) form a helical membrane-spanning segment. Residues 1342 to 1533 (GRLFQLIHPP…FCLFRWLKCS (192 aa)) lie on the Cytoplasmic side of the membrane. Residues 1534-1554 (CWLLLGVISLASAFFITLYSL) form a helical membrane-spanning segment. The Extracellular segment spans residues 1555–1575 (ELDKDQATSWVISMMLSVLQD). Residues 1576–1596 (IFISQPIKVIFLTLLFSLMAN) traverse the membrane as a helical segment. Topologically, residues 1597 to 1665 (HMPWLNKDKE…KLTGGTLVQI (69 aa)) are cytoplasmic. The chain crosses the membrane as a helical span at residues 1666–1676 (LFLTLLMTTVY). At 1677–1892 (SAKDSSRFFL…SLTSLQSSER (216 aa)) the chain is on the extracellular side. Residues Asn1712 and Asn1822 are each glycosylated (N-linked (GlcNAc) asparagine). A helical membrane pass occupies residues 1893-1921 (GFAWIVSQVVYYLLVCYYAFIQGCRLKRQ). The Cytoplasmic segment spans residues 1922-1930 (RLAFFTRKR). The chain crosses the membrane as a helical span at residues 1931 to 1949 (NLLDTSIVLISFSILGLSM). Residues 1950-1980 (QSLSLLHKKMQQYHCDRDRFISFYEALRVNS) are Extracellular-facing. Residues 1981–2002 (AVTHLRGFLLLFATVRVWDLLR) form a helical membrane-spanning segment. Residues 2003–2019 (HHAQLQVINKTLSKAWD) lie on the Cytoplasmic side of the membrane. A helical membrane pass occupies residues 2020–2044 (EVLGFILIIVVLLSSYAMTFNLLFG). The interval 2043–2081 (FGWSISDYQSFFRSIVTVVGLLMGTSKHKEVIALYPILG) is channel pore-region. At 2045 to 2077 (WSISDYQSFFRSIVTVVGLLMGTSKHKEVIALY) the chain is on the extracellular side. A helical transmembrane segment spans residues 2078-2097 (PILGSLLVLSSIILMGLVII). Over 2098-2151 (NLFVSAILIAFGKERKACEKEATLTDMLLQKLSSLLGIRLHQNPSEEHADNTGY) the chain is Cytoplasmic.

It belongs to the polycystin family. As to quaternary structure, heterotetramer with PKD2L1, composed of 3 subunit of PKD2L1 and 1 subunit of PKD1L3. In terms of processing, autoproteolytically processed at the GPS region of the GAIN-B domain; this cleavage modulates receptor activity. As to expression, expressed in a subset of taste receptor cells (type III taste cells) distinct from those involved in bitter, sweet and umami taste. Expressed in circumvallate and foliate taste buds, but not in surrounding non-gustatory lingual epithelium cells. Expressed in testis.

It is found in the cell membrane. The catalysed reaction is Ca(2+)(in) = Ca(2+)(out). The enzyme catalyses Na(+)(in) = Na(+)(out). It catalyses the reaction K(+)(in) = K(+)(out). It carries out the reaction Mg(2+)(in) = Mg(2+)(out). The non-selective cation channel is gated following an off-response property by acid: gated open after the removal of acid stimulus, but not during acid application. Non-selective cation channel activity is inhibited by capsaicin. Regulation of non-selective cation channel activity by external Ca(2+) is bimodal, first sensitizing and subsequently inactivating the current. The apo (closed) heterotetramer has an asymmetric selectivity filter (SF) guarded by Lys-2069 in absence of Ca(2+). However, Ca(2+)-entrance to the SF vestibule is accompanied by a swing motion of Lys-2069 on PKD1L3. Functionally, pore-forming subunit of a heterotetrameric, non-selective cation channel that is permeable to Ca(2+). Also shows permeability towards NA(1+), K(+) and Mg(2+). Heterotetrameric complex channel is activated by external low pH and Ca(2+), but opens only when the extracellular pH rises again and after the removal of acid stimulus. May act as a sour taste receptor in gustatory cells; however, its contribution to sour taste perception is unclear in vivo and may be indirect. The protein is Polycystin-1-like protein 3 of Mus musculus (Mouse).